Here is a 254-residue protein sequence, read N- to C-terminus: 5'/3'-nucleotidase SurE (254 aa).

Positions 9, 10, 40, and 93 each coordinate a divalent metal cation.

This sequence belongs to the SurE nucleotidase family. Requires a divalent metal cation as cofactor.

The protein localises to the cytoplasm. The enzyme catalyses a ribonucleoside 5'-phosphate + H2O = a ribonucleoside + phosphate. The catalysed reaction is a ribonucleoside 3'-phosphate + H2O = a ribonucleoside + phosphate. It carries out the reaction [phosphate](n) + H2O = [phosphate](n-1) + phosphate + H(+). In terms of biological role, nucleotidase with a broad substrate specificity as it can dephosphorylate various ribo- and deoxyribonucleoside 5'-monophosphates and ribonucleoside 3'-monophosphates with highest affinity to 3'-AMP. Also hydrolyzes polyphosphate (exopolyphosphatase activity) with the preference for short-chain-length substrates (P20-25). Might be involved in the regulation of dNTP and NTP pools, and in the turnover of 3'-mononucleotides produced by numerous intracellular RNases (T1, T2, and F) during the degradation of various RNAs. This chain is 5'/3'-nucleotidase SurE, found in Yersinia pseudotuberculosis serotype O:1b (strain IP 31758).